The sequence spans 250 residues: Glycerol-1-phosphate phosphohydrolase 2 (250 aa).

Asp18 acts as the Nucleophile in catalysis. Asp18 and Asp20 together coordinate Mg(2+). Asp20 serves as the catalytic Proton donor. Residue Lys64 forms a Glycyl lysine isopeptide (Lys-Gly) (interchain with G-Cter in ubiquitin) linkage. Ser90 is subject to Phosphoserine. Lys144 participates in a covalent cross-link: Glycyl lysine isopeptide (Lys-Gly) (interchain with G-Cter in ubiquitin). Asp179 lines the Mg(2+) pocket.

Belongs to the HAD-like hydrolase superfamily. DOG/GPP family. As to quaternary structure, monomer. It depends on Mg(2+) as a cofactor.

The protein resides in the cytoplasm. It is found in the nucleus. It carries out the reaction sn-glycerol 1-phosphate + H2O = glycerol + phosphate. The enzyme catalyses sn-glycerol 3-phosphate + H2O = glycerol + phosphate. Its function is as follows. Glycerol-1-phosphate phosphohydrolase involved in glycerol biosynthesis. Plays a role in osmoadaptation. In Saccharomyces cerevisiae (strain ATCC 204508 / S288c) (Baker's yeast), this protein is Glycerol-1-phosphate phosphohydrolase 2.